Reading from the N-terminus, the 351-residue chain is Soluble interferon alpha/beta receptor OPG204 (351 aa).

The signal sequence occupies residues 1-19; the sequence is MTMKMMVHIYFVSLLLLLF. 2 Ig-like C2-type domains span residues 65–147 and 155–237; these read LGEP…RSHI and PKTY…IVVS. Intrachain disulfides connect cysteine 73/cysteine 129 and cysteine 172/cysteine 221. Asparagine 117, asparagine 182, asparagine 261, asparagine 269, and asparagine 321 each carry an N-linked (GlcNAc...) asparagine; by host glycan. Residues 246–345 enclose the Ig-like V-type domain; sequence PSQDHRFKLI…HNYYFEKTLT (100 aa). Cysteine 272 and cysteine 333 are disulfide-bonded.

This sequence belongs to the interleukin-1 receptor family. Interacts with host IFNA1.

The protein resides in the secreted. Its function is as follows. Counteracts the antiviral effects of host IFN-alpha/beta and key IFN-inducible proteins involved in viral RNA degradation suxh as host OAS1. Acts as a soluble IFN-alpha receptor and thus inhibits the interaction between host IFN-alpha and its receptor. The polypeptide is Soluble interferon alpha/beta receptor OPG204 (OPG204) (Vaccinia virus (strain Western Reserve) (VACV)).